Here is a 54-residue protein sequence, read N- to C-terminus: Ovomucoid (54 aa).

Residues 4–54 form the Kazal-like domain; it reads VDCSEHPKPACTLEDRPLCGSDNKIYSNKCDFCNAVLESNGTLTLSHFGKC. 3 disulfide bridges follow: C6–C36, C14–C33, and C22–C54. N-linked (GlcNAc...) asparagine glycosylation occurs at N43.

The protein localises to the secreted. The protein is Ovomucoid of Argusianus argus (Great argus).